The sequence spans 381 residues: Pentatricopeptide repeat-containing protein 2, mitochondrial (381 aa).

Residues 159–193 form a PPR repeat; the sequence is TSFNILMDMLFTKGKYERALQVLIEMKNQDVRFSK. Phosphoserine is present on serine 375.

Belongs to the PTCD2 family. High expression in heart and liver and low expression in kidney, brain and testis.

Its subcellular location is the mitochondrion. Involved in mitochondrial RNA maturation and mitochondrial respiratory chain function. The polypeptide is Pentatricopeptide repeat-containing protein 2, mitochondrial (Ptcd2) (Mus musculus (Mouse)).